We begin with the raw amino-acid sequence, 281 residues long: Large ribosomal subunit protein uL2 (281 aa).

The segment at 213–281 is disordered; the sequence is RNRHKGIRPT…LIIRRRKESK (69 aa).

It belongs to the universal ribosomal protein uL2 family. As to quaternary structure, part of the 50S ribosomal subunit. Forms a bridge to the 30S subunit in the 70S ribosome.

One of the primary rRNA binding proteins. Required for association of the 30S and 50S subunits to form the 70S ribosome, for tRNA binding and peptide bond formation. It has been suggested to have peptidyltransferase activity; this is somewhat controversial. Makes several contacts with the 16S rRNA in the 70S ribosome. This is Large ribosomal subunit protein uL2 from Mycoplasmopsis pulmonis (strain UAB CTIP) (Mycoplasma pulmonis).